Consider the following 437-residue polypeptide: tRNA-2-methylthio-N(6)-dimethylallyladenosine synthase (437 aa).

In terms of domain architecture, MTTase N-terminal spans 1 to 115; it reads MKVYIETMGC…ISQVIHKEKA (115 aa). [4Fe-4S] cluster is bound by residues C10, C46, C78, C148, C152, and C155. Residues 134 to 367 enclose the Radical SAM core domain; sequence KKAQIRSLLN…QNRHKEILEE (234 aa). A TRAM domain is found at 370–436; sequence KLEVGKTHVV…KGRLMATTKG (67 aa).

This sequence belongs to the methylthiotransferase family. MiaB subfamily. In terms of assembly, monomer. The cofactor is [4Fe-4S] cluster.

Its subcellular location is the cytoplasm. It carries out the reaction N(6)-dimethylallyladenosine(37) in tRNA + (sulfur carrier)-SH + AH2 + 2 S-adenosyl-L-methionine = 2-methylsulfanyl-N(6)-dimethylallyladenosine(37) in tRNA + (sulfur carrier)-H + 5'-deoxyadenosine + L-methionine + A + S-adenosyl-L-homocysteine + 2 H(+). In terms of biological role, catalyzes the methylthiolation of N6-(dimethylallyl)adenosine (i(6)A), leading to the formation of 2-methylthio-N6-(dimethylallyl)adenosine (ms(2)i(6)A) at position 37 in tRNAs that read codons beginning with uridine. This Helicobacter pylori (strain G27) protein is tRNA-2-methylthio-N(6)-dimethylallyladenosine synthase.